Here is a 472-residue protein sequence, read N- to C-terminus: WASH complex subunit 1 (472 aa).

A required for WASH complex assembly region spans residues 1-51 (MPQNRSVESQAYSLPLILPDLRREEAIHQITDTLQHLQTVSNDIFSRILQR). Disordered regions lie at residues 294–411 (DRQD…GGDL) and 429–472 (KVPA…DWES). Residues 301–334 (LPPPPPPPPPPPPPPPPEPSALSPPAPPPPPLSI) are compositionally biased toward pro residues. Residues 352–472 (QGAPKEVVNP…GDGDEDDWES (121 aa)) form a VCA region. The 23-residue stretch at 364–386 (GRASLLESIRQAGGIGKANLRNV) folds into the WH2 domain. Residues 385–400 (NVKEKKLEKKKMKEQE) are compositionally biased toward basic and acidic residues.

This sequence belongs to the WASH1 family. In terms of assembly, component of the WASH complex.

Its subcellular location is the early endosome membrane. The protein localises to the recycling endosome membrane. Functionally, acts as a nucleation-promoting factor at the surface of endosomes, where it recruits and activates the Arp2/3 complex to induce actin polymerization, playing a key role in the fission of tubules that serve as transport intermediates during endosome sorting. The protein is WASH complex subunit 1 of Xenopus laevis (African clawed frog).